We begin with the raw amino-acid sequence, 239 residues long: TPR repeat-containing protein TP_0282 (239 aa).

Residues 21-43 (LLVGVLVAILGGLGLSAGCLLVM) form a helical membrane-spanning segment. TPR repeat units lie at residues 112 to 145 (AYAQ…ARRS) and 149 to 182 (GVYY…QDFP).

The protein resides in the cell membrane. The polypeptide is TPR repeat-containing protein TP_0282 (Treponema pallidum (strain Nichols)).